Reading from the N-terminus, the 214-residue chain is uncharacterized protein (214 aa).

The interval 131-214 is disordered; that stretch reads TEDILSPPSP…SSSSDSLDAY (84 aa). Residues 174–189 show a composition bias toward basic residues; the sequence is HRRRRTRRQLRYRQRV. The span at 197–214 shows a compositional bias: low complexity; the sequence is DLGEPLESSSSSDSLDAY.

This is an uncharacterized protein from Tupaia.